Here is a 303-residue protein sequence, read N- to C-terminus: Oxygen-dependent coproporphyrinogen-III oxidase (303 aa).

Position 93 (serine 93) interacts with substrate. Residues histidine 97 and histidine 107 each coordinate a divalent metal cation. The Proton donor role is filled by histidine 107. Substrate is bound at residue 109-111 (NVR). A divalent metal cation-binding residues include histidine 146 and histidine 176. Positions 241-276 (YVEFNLVYDRGTLFGLQSGGRTESILMSLPPQVRWG) are important for dimerization. 259–261 (GGR) serves as a coordination point for substrate.

It belongs to the aerobic coproporphyrinogen-III oxidase family. In terms of assembly, homodimer. Requires a divalent metal cation as cofactor.

It is found in the cytoplasm. The enzyme catalyses coproporphyrinogen III + O2 + 2 H(+) = protoporphyrinogen IX + 2 CO2 + 2 H2O. It functions in the pathway porphyrin-containing compound metabolism; protoporphyrin-IX biosynthesis; protoporphyrinogen-IX from coproporphyrinogen-III (O2 route): step 1/1. In terms of biological role, involved in the heme biosynthesis. Catalyzes the aerobic oxidative decarboxylation of propionate groups of rings A and B of coproporphyrinogen-III to yield the vinyl groups in protoporphyrinogen-IX. This Pseudomonas putida (strain ATCC 700007 / DSM 6899 / JCM 31910 / BCRC 17059 / LMG 24140 / F1) protein is Oxygen-dependent coproporphyrinogen-III oxidase.